Consider the following 291-residue polypeptide: Cell division control protein 2 homolog 1 (291 aa).

Positions 1-284 constitute a Protein kinase domain; sequence GENVEKIGEG…ARSAVEHEYF (284 aa). Residues 7-15 and Lys30 contribute to the ATP site; that span reads IGEGTYGVV. Thr11 bears the Phosphothreonine mark. Tyr12 carries the post-translational modification Phosphotyrosine. Asp124 (proton acceptor) is an active-site residue. Thr158 carries the phosphothreonine; by CAK modification.

Belongs to the protein kinase superfamily. CMGC Ser/Thr protein kinase family. CDC2/CDKX subfamily. As to expression, found in most organs including root, young leaf, stem, vegetative meristem and flower bud.

It catalyses the reaction L-seryl-[protein] + ATP = O-phospho-L-seryl-[protein] + ADP + H(+). The catalysed reaction is L-threonyl-[protein] + ATP = O-phospho-L-threonyl-[protein] + ADP + H(+). The enzyme catalyses [DNA-directed RNA polymerase] + ATP = phospho-[DNA-directed RNA polymerase] + ADP + H(+). Its activity is regulated as follows. Phosphorylation at Thr-11 or Tyr-12 inactivates the enzyme, while phosphorylation at Thr-158 activates it. In terms of biological role, plays a key role in the control of the eukaryotic cell cycle. Component of the kinase complex that phosphorylates the repetitive C-terminus of RNA polymerase II. This Medicago sativa (Alfalfa) protein is Cell division control protein 2 homolog 1 (CDC2A).